Consider the following 292-residue polypeptide: uncharacterized protein (292 aa).

The region spanning 1 to 58 is the HTH lysR-type domain; the sequence is MEWEQLEYFQTLARMQHVTKAAKSLSITQPALSRSIARLENHLGVPLFDRQGRSISLN. The segment at residues 18 to 37 is a DNA-binding region (H-T-H motif); the sequence is VTKAAKSLSITQPALSRSIA.

It belongs to the LysR transcriptional regulatory family.

This is an uncharacterized protein from Bacillus subtilis (strain 168).